The following is a 1632-amino-acid chain: Guanine exchange factor for Rac 30 (1632 aa).

One can recognise a Calponin-homology (CH) domain in the interval 16–122 (NIQIDSFTSW…VIFLLIQKIK (107 aa)). Disordered stretches follow at residues 134–155 (QGET…TPTK) and 171–285 (FSHI…PTTG). Composition is skewed to low complexity over residues 137 to 154 (TTGT…TTPT) and 180 to 284 (QSSS…SPTT). IQ domains lie at 388 to 417 (DLKK…KYKQ) and 432 to 461 (AYRG…LYRR). Residues 460-638 (RRNEIVKEIL…KDVAEYVNEK (179 aa)) form the DH domain. Over residues 775 to 795 (QINNQNNNQNNNQNNNLNNNN) the composition is skewed to low complexity. A disordered region spans residues 775–798 (QINNQNNNQNNNQNNNLNNNNDDS). Residues 940–1038 (DSEFSNVLEK…WISLIRLSIK (99 aa)) enclose the PH 1 domain. The segment covering 1138–1156 (STSASQSQSQSPSPSPSHS) has biased composition (low complexity). Residues 1138-1161 (STSASQSQSQSPSPSPSHSINQKQ) are disordered. The Arf-GAP domain maps to 1271–1389 (NSCGDNINND…NNNNNNSQNG (119 aa)). The segment at 1286-1309 (CAECGASDPSWVSINYGVVVCLDC) adopts a C4-type zinc-finger fold. Composition is skewed to low complexity over residues 1380–1402 (NNNN…TSTT), 1409–1431 (STPT…TTQT), and 1441–1481 (SSPT…TTPT). The disordered stretch occupies residues 1380 to 1521 (NNNNNNSQNG…SSHAITERKT (142 aa)). Positions 1500-1515 (DTSNGKGTWSRGSSHA) are enriched in polar residues. The 100-residue stretch at 1532-1631 (KKEHQGYLFK…WLDVLSSHTT (100 aa)) folds into the PH 2 domain.

Its subcellular location is the membrane. It is found in the cytoplasmic vesicle. It localises to the phagosome membrane. In terms of biological role, GTPase-activating protein for Rac involved in streaming and development. This chain is Guanine exchange factor for Rac 30 (gxcDD), found in Dictyostelium discoideum (Social amoeba).